The primary structure comprises 370 residues: Developmentally-regulated GTP-binding protein 1 homolog (370 aa).

An OBG-type G domain is found at 65-292 (ARVGLIGFPS…LLDKIWEYLK (228 aa)). Residues 71–78 (GFPSVGKS), 117–121 (DLPGI), and 250–253 (NKID) each bind GTP. The 78-residue stretch at 292–369 (KLIRVYTKPK…ADEDIVQIVK (78 aa)) folds into the TGS domain.

Belongs to the TRAFAC class OBG-HflX-like GTPase superfamily. OBG GTPase family.

The chain is Developmentally-regulated GTP-binding protein 1 homolog (drg1) from Dictyostelium discoideum (Social amoeba).